We begin with the raw amino-acid sequence, 275 residues long: Phosphonoacetaldehyde hydrolase (275 aa).

The active-site Nucleophile is the Asp-15. Mg(2+) contacts are provided by Asp-15 and Ala-17. The active-site Schiff-base intermediate with substrate is the Lys-56. Asp-189 is a binding site for Mg(2+).

It belongs to the HAD-like hydrolase superfamily. PhnX family. In terms of assembly, homodimer. Mg(2+) serves as cofactor.

It catalyses the reaction phosphonoacetaldehyde + H2O = acetaldehyde + phosphate + H(+). In terms of biological role, involved in phosphonate degradation. The sequence is that of Phosphonoacetaldehyde hydrolase from Pseudomonas entomophila (strain L48).